Here is a 158-residue protein sequence, read N- to C-terminus: Interleukin-17A (158 aa).

The N-terminal stretch at 1 to 25 (MSPGRASSVSLMLLLLLSLAATVKA) is a signal peptide. N-linked (GlcNAc...) asparagine glycosylation occurs at Asn71. Cystine bridges form between Cys97–Cys147 and Cys102–Cys149.

Belongs to the IL-17 family. Homodimer. Forms complexes with IL17RA and IL17RC receptors with 2:1 binding stoichiometry: two receptor chains for one interleukin molecule. IL17A homodimer preferentially drives the formation of IL17RA-IL17RC heterodimeric receptor complex. IL17A homodimer adopts an asymmetrical ternary structure with one IL17RA molecule, allowing for high affinity interactions of one IL17A monomer with one IL17RA molecule (via D1 and D2 domains), while disfavoring binding of a second IL17RA molecule on the other IL17A monomer. Heterodimer with IL17F. IL17A-IL17F forms complexes with IL17RA-IL17RC, but with lower affinity when compared to IL17A homodimer. IL17RA and IL17RC chains cannot distinguish between IL17A and IL17F molecules, potentially enabling the formation of topologically distinct complexes. Expressed by Th17 cell lineage (at protein level). The expression pattern reflects the differentiation state, with IL17A-IL17F heterodimers produced at higher levels than IL17A-IL17A and IL17F-IL17F dimers in fully differentiated Th17 cells. Expressed in innate lymphoid cells (at protein level). Expressed in gamma-delta T cell subsets (at protein level). Expressed in iNKT cells (at protein level).

It localises to the secreted. Functionally, effector cytokine of innate and adaptive immune system involved in antimicrobial host defense and maintenance of tissue integrity. Signals via IL17RA-IL17RC heterodimeric receptor complex, triggering homotypic interaction of IL17RA and IL17RC chains with TRAF3IP2 adapter. This leads to downstream TRAF6-mediated activation of NF-kappa-B and MAPkinase pathways ultimately resulting in transcriptional activation of cytokines, chemokines, antimicrobial peptides and matrix metalloproteinases, with potential strong immune inflammation. Plays an important role in connecting T cell-mediated adaptive immunity and acute inflammatory response to destroy extracellular bacteria and fungi. As a signature effector cytokine of T-helper 17 cells (Th17), primarily induces neutrophil activation and recruitment at infection and inflammatory sites. In airway epithelium, mediates neutrophil chemotaxis via induction of CXCL1 and CXCL5 chemokines. In secondary lymphoid organs, contributes to germinal center formation by regulating the chemotactic response of B cells to CXCL12 and CXCL13, enhancing retention of B cells within the germinal centers, B cell somatic hypermutation rate and selection toward plasma cells. Effector cytokine of a subset of gamma-delta T cells that functions as part of an inflammatory circuit downstream IL1B, TLR2 and IL23A-IL12B to promote neutrophil recruitment for efficient bacterial clearance. Effector cytokine of innate immune cells including invariant natural killer cell (iNKT) and group 3 innate lymphoid cells that mediate initial neutrophilic inflammation. Involved in the maintenance of the integrity of epithelial barriers during homeostasis and pathogen infection. Upon acute injury, has a direct role in epithelial barrier formation by regulating OCLN localization and tight junction biogenesis. As part of the mucosal immune response induced by commensal bacteria, enhances host's ability to resist pathogenic bacterial and fungal infections by promoting neutrophil recruitment and antimicrobial peptides release. In synergy with IL17F, mediates the production of antimicrobial beta-defensins DEFB1, DEFB103A, and DEFB104A by mucosal epithelial cells, limiting the entry of microbes through the epithelial barriers. Involved in antiviral host defense through various mechanisms. Enhances immunity against West Nile virus by promoting T cell cytotoxicity. May play a beneficial role in influenza A virus (H5N1) infection by enhancing B cell recruitment and immune response in the lung. Contributes to influenza A virus (H1N1) clearance by driving the differentiation of B-1a B cells, providing for production of virus-specific IgM antibodies at first line of host defense. In Mus musculus (Mouse), this protein is Interleukin-17A (Il17a).